We begin with the raw amino-acid sequence, 422 residues long: MTVRTKVSTKDIDEAYLRLKNIVKETPLQFDHYLSQKYNCNVYLKREDLQWVRSFKLRGAYNAISVLSNEEKNKGITCASAGNHAQGVAYTAKKLNLKAVIFMPVTTPRQKINQVKFFGDSNVEIVLIGDTFDHCLAQALNYTKQHKMNFIDPFNNVYTIAGQGTLAKEILNQAEKEDKTFDYVFAAIGGGGLISGVSTYFKAHSPHTKIIGVEPTGASSMYQSVVINHSIVTLENIDKFVDGASVARVGDITFDIAKDKVDDYVQVDEGAVCSTILDMYSKQAIVAEPAGALSVSALEQYKKQIENKTIVCIVSGGNNDINRMKEIEERSLLFEEMKHYFILNFPQRPGALREFVNDVLGPQDDITKFEYLKKTSQNTGTVIIGIQLKHHDDLIQLKDRVCQFDPSNIYINENKMLYSLLI.

N6-(pyridoxal phosphate)lysine is present on lysine 56. Pyridoxal 5'-phosphate is bound by residues asparagine 83, 189–193 (GGGGL), and serine 315. In terms of domain architecture, ACT-like spans 339-413 (HYFILNFPQR…FDPSNIYINE (75 aa)).

It belongs to the serine/threonine dehydratase family. As to quaternary structure, homotetramer. It depends on pyridoxal 5'-phosphate as a cofactor.

The catalysed reaction is L-threonine = 2-oxobutanoate + NH4(+). The protein operates within amino-acid biosynthesis; L-isoleucine biosynthesis; 2-oxobutanoate from L-threonine: step 1/1. Its function is as follows. Catalyzes the anaerobic formation of alpha-ketobutyrate and ammonia from threonine in a two-step reaction. The first step involved a dehydration of threonine and a production of enamine intermediates (aminocrotonate), which tautomerizes to its imine form (iminobutyrate). Both intermediates are unstable and short-lived. The second step is the nonenzymatic hydrolysis of the enamine/imine intermediates to form 2-ketobutyrate and free ammonia. In the low water environment of the cell, the second step is accelerated by RidA. This Staphylococcus epidermidis (strain ATCC 12228 / FDA PCI 1200) protein is L-threonine dehydratase biosynthetic IlvA (ilvA).